Here is an 88-residue protein sequence, read N- to C-terminus: Apolipoprotein C-I (88 aa).

The N-terminal stretch at 1 to 26 is a signal peptide; the sequence is MRLFLSLPVLVVVLAMVLEGPAPAQA.

It belongs to the apolipoprotein C1 family.

The protein resides in the secreted. Its function is as follows. Inhibitor of lipoprotein binding to the low density lipoprotein (LDL) receptor, LDL receptor-related protein, and very low density lipoprotein (VLDL) receptor. Associates with high density lipoproteins (HDL) and the triacylglycerol-rich lipoproteins in the plasma and makes up about 10% of the protein of the VLDL and 2% of that of HDL. Appears to interfere directly with fatty acid uptake and is also the major plasma inhibitor of cholesteryl ester transfer protein (CETP). Binds free fatty acids and reduces their intracellular esterification. Modulates the interaction of APOE with beta-migrating VLDL and inhibits binding of beta-VLDL to the LDL receptor-related protein. In Arctocephalus gazella (Antarctic fur seal), this protein is Apolipoprotein C-I (APOC1).